The following is a 178-amino-acid chain: MNAHEALAEIAGKMFGDNAKKVMMVLASNVEVSDEDLAKDLKMDPPELRKLLNDLFEARLVKYRRARDENIGWYKYYWRITDEPIQQILSDRKRLTLSILEKVLSLEENSETYVCPKCGTRYTVDEAENNNYTCEVCGEVLEPFDNTHRVEKLKRAIELLGNWDPSPKQQASRAIPHA.

In terms of domain architecture, HTH TFE/IIEalpha-type spans 3-86 (AHEALAEIAG…YWRITDEPIQ (84 aa)).

Belongs to the TFE family. As to quaternary structure, monomer. Interaction with RNA polymerase subunits RpoF and RpoE is necessary for Tfe stimulatory transcription activity. Able to interact with Tbp and RNA polymerase in the absence of DNA promoter. Interacts both with the preinitiation and elongation complexes.

In terms of biological role, transcription factor that plays a role in the activation of archaeal genes transcribed by RNA polymerase. Facilitates transcription initiation by enhancing TATA-box recognition by TATA-box-binding protein (Tbp), and transcription factor B (Tfb) and RNA polymerase recruitment. Not absolutely required for transcription in vitro, but particularly important in cases where Tbp or Tfb function is not optimal. It dynamically alters the nucleic acid-binding properties of RNA polymerases by stabilizing the initiation complex and destabilizing elongation complexes. Seems to translocate with the RNA polymerase following initiation and acts by binding to the non template strand of the transcription bubble in elongation complexes. This is Transcription factor E from Thermofilum pendens (strain DSM 2475 / Hrk 5).